The primary structure comprises 132 residues: Protein NrdI (132 aa).

This sequence belongs to the NrdI family.

Probably involved in ribonucleotide reductase function. The polypeptide is Protein NrdI (Bartonella tribocorum (strain CIP 105476 / IBS 506)).